A 259-amino-acid polypeptide reads, in one-letter code: Global transcriptional regulator CodY (259 aa).

The GAF domain stretch occupies residues 1–155; that stretch reads MNLLEKTRKI…GATVVGMEIL (155 aa). Positions 203 to 222 form a DNA-binding region, H-T-H motif; that stretch reads ASKIADRVGITRSVIVNALR. Ser215 is subject to Phosphoserine.

This sequence belongs to the CodY family.

The protein resides in the cytoplasm. DNA-binding global transcriptional regulator which is involved in the adaptive response to starvation and acts by directly or indirectly controlling the expression of numerous genes in response to nutrient availability. During rapid exponential growth, CodY is highly active and represses genes whose products allow adaptation to nutrient depletion. The protein is Global transcriptional regulator CodY of Anoxybacillus flavithermus (strain DSM 21510 / WK1).